The sequence spans 548 residues: ATP synthase subunit alpha, mitochondrial (548 aa).

209 to 216 (GDRQTGKT) is an ATP binding site.

Belongs to the ATPase alpha/beta chains family. F-type ATPases have 2 components, CF(1) - the catalytic core - and CF(0) - the membrane proton channel. CF(1) has five subunits: alpha(3), beta(3), gamma(1), delta(1), epsilon(1). CF(0) has three main subunits: a, b and c.

Its subcellular location is the mitochondrion. The protein resides in the mitochondrion inner membrane. Mitochondrial membrane ATP synthase (F(1)F(0) ATP synthase or Complex V) produces ATP from ADP in the presence of a proton gradient across the membrane which is generated by electron transport complexes of the respiratory chain. F-type ATPases consist of two structural domains, F(1) - containing the extramembraneous catalytic core, and F(0) - containing the membrane proton channel, linked together by a central stalk and a peripheral stalk. During catalysis, ATP synthesis in the catalytic domain of F(1) is coupled via a rotary mechanism of the central stalk subunits to proton translocation. Subunits alpha and beta form the catalytic core in F(1). Rotation of the central stalk against the surrounding alpha(3)beta(3) subunits leads to hydrolysis of ATP in three separate catalytic sites on the beta subunits. Subunit alpha does not bear the catalytic high-affinity ATP-binding sites. This chain is ATP synthase subunit alpha, mitochondrial (ATP1), found in Kluyveromyces lactis (strain ATCC 8585 / CBS 2359 / DSM 70799 / NBRC 1267 / NRRL Y-1140 / WM37) (Yeast).